A 308-amino-acid chain; its full sequence is Probable manganese-dependent inorganic pyrophosphatase (308 aa).

Mn(2+) is bound by residues histidine 9, aspartate 13, aspartate 15, aspartate 75, histidine 97, and aspartate 149.

It belongs to the PPase class C family. Requires Mn(2+) as cofactor.

The protein localises to the cytoplasm. It catalyses the reaction diphosphate + H2O = 2 phosphate + H(+). The polypeptide is Probable manganese-dependent inorganic pyrophosphatase (Listeria monocytogenes serotype 4a (strain HCC23)).